We begin with the raw amino-acid sequence, 75 residues long: MKNKPDDRRDNVDKIQYNITKTIQNCELADEMIAKTDDEKTKKTLIEKNQRRREALDGMREEIKDEARDKKNGYM.

Residues 48–75 form a disordered region; it reads KNQRRREALDGMREEIKDEARDKKNGYM.

Belongs to the Tlp family.

In Clostridium botulinum (strain 657 / Type Ba4), this protein is Protein Tlp homolog.